The following is a 374-amino-acid chain: Glutamate 5-kinase (374 aa).

Lys-16 is a binding site for ATP. Residues Ser-56, Asp-143, and Asn-155 each contribute to the substrate site. Residue 175–176 coordinates ATP; that stretch reads TD. Positions 282-360 constitute a PUA domain; sequence RGRVVLDAGA…SEIEAVLGYV (79 aa).

It belongs to the glutamate 5-kinase family.

It is found in the cytoplasm. The enzyme catalyses L-glutamate + ATP = L-glutamyl 5-phosphate + ADP. It functions in the pathway amino-acid biosynthesis; L-proline biosynthesis; L-glutamate 5-semialdehyde from L-glutamate: step 1/2. Functionally, catalyzes the transfer of a phosphate group to glutamate to form L-glutamate 5-phosphate. This is Glutamate 5-kinase from Ralstonia pickettii (strain 12J).